A 144-amino-acid polypeptide reads, in one-letter code: TSC22 domain family protein 1 (144 aa).

The leucine-zipper stretch occupies residues 77-98 (LKEQIKELIEKNSQLEQENNLL). The disordered stretch occupies residues 109–144 (QFQAQLQTGSPPATTQPQGTTQPPAQPASQGSGPTA). The span at 115–144 (QTGSPPATTQPQGTTQPPAQPASQGSGPTA) shows a compositional bias: low complexity.

This sequence belongs to the TSC-22/Dip/Bun family. As to quaternary structure, forms homodimers. Forms a heterodimer with TSC22D4/THG1. Interacts with histone H1-2. Interacts with GNL3.

The protein localises to the cytoplasm. Its subcellular location is the nucleus. Its function is as follows. Transcriptional repressor. Plays a role in the repression of hematopoietic precursor cell growth. Promotes IL2 deprivation-induced apoptosis in T-lymphocytes, via repression of TSC22D3/GILZ transcription and activation of the caspase cascade. Positively regulates cell death in response to TGFB3 during mammary gland involution. This Bos taurus (Bovine) protein is TSC22 domain family protein 1.